A 249-amino-acid chain; its full sequence is Leucyl/phenylalanyl-tRNA--protein transferase (249 aa).

The segment at 1-21 is disordered; that stretch reads MSRTLPHLLSPDPASPFPPAE.

The protein belongs to the L/F-transferase family.

Its subcellular location is the cytoplasm. It catalyses the reaction N-terminal L-lysyl-[protein] + L-leucyl-tRNA(Leu) = N-terminal L-leucyl-L-lysyl-[protein] + tRNA(Leu) + H(+). The catalysed reaction is N-terminal L-arginyl-[protein] + L-leucyl-tRNA(Leu) = N-terminal L-leucyl-L-arginyl-[protein] + tRNA(Leu) + H(+). It carries out the reaction L-phenylalanyl-tRNA(Phe) + an N-terminal L-alpha-aminoacyl-[protein] = an N-terminal L-phenylalanyl-L-alpha-aminoacyl-[protein] + tRNA(Phe). In terms of biological role, functions in the N-end rule pathway of protein degradation where it conjugates Leu, Phe and, less efficiently, Met from aminoacyl-tRNAs to the N-termini of proteins containing an N-terminal arginine or lysine. The chain is Leucyl/phenylalanyl-tRNA--protein transferase from Xanthomonas campestris pv. campestris (strain B100).